Consider the following 208-residue polypeptide: N-(5'-phosphoribosyl)anthranilate isomerase (208 aa).

The protein belongs to the TrpF family.

It carries out the reaction N-(5-phospho-beta-D-ribosyl)anthranilate = 1-(2-carboxyphenylamino)-1-deoxy-D-ribulose 5-phosphate. Its pathway is amino-acid biosynthesis; L-tryptophan biosynthesis; L-tryptophan from chorismate: step 3/5. The chain is N-(5'-phosphoribosyl)anthranilate isomerase from Nitrosomonas eutropha (strain DSM 101675 / C91 / Nm57).